Consider the following 589-residue polypeptide: Protein kinase G11A (589 aa).

The disordered stretch occupies residues 1 to 167 (MASKAMPRAP…SACSSISSVT (167 aa)). Polar residues-rich tracts occupy residues 15–36 (NLQS…SPSK) and 63–76 (TQHQ…TGSN). Positions 91 to 100 (RLADEEKGVV) are enriched in basic and acidic residues. Low complexity predominate over residues 142-165 (SSSRCRPSTSSDVSDESACSSISS). Residues 195 to 533 (FKLLKKLGCG…ATEIKQHPFF (339 aa)) form the Protein kinase domain. Residues 201–209 (LGCGDIGSV) and lysine 224 each bind ATP. Aspartate 320 (proton acceptor) is an active-site residue. The segment at 551 to 589 (RPVEIERPPKQPVSTSEPAAAPSDAAQKSSDSYLEFDFF) is disordered.

Belongs to the protein kinase superfamily. Ser/Thr protein kinase family.

It carries out the reaction L-seryl-[protein] + ATP = O-phospho-L-seryl-[protein] + ADP + H(+). It catalyses the reaction L-threonyl-[protein] + ATP = O-phospho-L-threonyl-[protein] + ADP + H(+). Its function is as follows. May play a role in the regulation of metabolism and signal transduction processes. The polypeptide is Protein kinase G11A (Oryza sativa subsp. japonica (Rice)).